The chain runs to 90 residues: Molybdopterin synthase sulfur carrier subunit (90 aa).

At Gly-90 the chain carries 1-thioglycine; alternate. The residue at position 90 (Gly-90) is a Glycyl adenylate; alternate.

This sequence belongs to the MoaD family. MOCS2A subfamily. In terms of assembly, heterotetramer; composed of 2 small (Mocs2A) and 2 large (Mocs2B) subunits. C-terminal thiocarboxylation occurs in 2 steps, it is first acyl-adenylated (-COAMP) via the hesA/moeB/thiF part of MOCS3, then thiocarboxylated (-COSH) via the rhodanese domain of MOCS3.

The protein resides in the cytoplasm. The protein operates within cofactor biosynthesis; molybdopterin biosynthesis. Its function is as follows. Acts as a sulfur carrier required for molybdopterin biosynthesis. Component of the molybdopterin synthase complex that catalyzes the conversion of precursor Z into molybdopterin by mediating the incorporation of 2 sulfur atoms into precursor Z to generate a dithiolene group. In the complex, serves as sulfur donor by being thiocarboxylated (-COSH) at its C-terminus by MOCS3. After interaction with Mocs2B, the sulfur is then transferred to precursor Z to form molybdopterin. This chain is Molybdopterin synthase sulfur carrier subunit, found in Drosophila sechellia (Fruit fly).